A 938-amino-acid polypeptide reads, in one-letter code: TFIIH basal transcription factor complex helicase/translocase XPB subunit (938 aa).

Residues phenylalanine 394–leucine 562 form the Helicase ATP-binding domain. Leucine 407–threonine 414 contacts ATP. A DEVH box motif is present at residues aspartate 515–histidine 518. Positions tryptophan 627–valine 781 constitute a Helicase C-terminal domain.

The protein belongs to the helicase family. RAD25/XPB subfamily. As to quaternary structure, component of the 7-subunit TFIIH core complex composed of XPB, XPD, SSL1, TFB1, TFB2, TFB4 and TFB5.

The catalysed reaction is Couples ATP hydrolysis with the unwinding of duplex DNA by translocating in the 3'-5' direction.. It carries out the reaction ATP + H2O = ADP + phosphate + H(+). In terms of biological role, ATP-dependent 3'-5' DNA helicase/translocase; binds dsDNA rather than ssDNA, unzipping it in a translocase rather than classical helicase activity. Component of the general transcription factor IIH (TFIIH) core complex, involved in spliced leader RNA (SL RNA) gene transcription by RNA polymerase II. TFIIH has an essential role in transcription initiation. When the pre-initiation complex (PIC) has been established, TFIIH is required for promoter opening and promoter escape. The ATPase activity of XPB is required for promoter opening and promoter escape. The protein is TFIIH basal transcription factor complex helicase/translocase XPB subunit of Trypanosoma brucei brucei (strain 927/4 GUTat10.1).